A 111-amino-acid polypeptide reads, in one-letter code: Nucleoid-associated protein Cphamn1_1179 (111 aa).

It belongs to the YbaB/EbfC family. Homodimer.

It is found in the cytoplasm. It localises to the nucleoid. Binds to DNA and alters its conformation. May be involved in regulation of gene expression, nucleoid organization and DNA protection. The protein is Nucleoid-associated protein Cphamn1_1179 of Chlorobium phaeobacteroides (strain BS1).